Reading from the N-terminus, the 198-residue chain is Probable molybdenum cofactor guanylyltransferase (198 aa).

GTP-binding positions include 11–13 (LAG), K23, D71, and D102. D102 contacts Mg(2+).

The protein belongs to the MobA family. Mg(2+) is required as a cofactor.

Its subcellular location is the cytoplasm. The enzyme catalyses Mo-molybdopterin + GTP + H(+) = Mo-molybdopterin guanine dinucleotide + diphosphate. Its function is as follows. Transfers a GMP moiety from GTP to Mo-molybdopterin (Mo-MPT) cofactor (Moco or molybdenum cofactor) to form Mo-molybdopterin guanine dinucleotide (Mo-MGD) cofactor. The chain is Probable molybdenum cofactor guanylyltransferase from Halalkalibacterium halodurans (strain ATCC BAA-125 / DSM 18197 / FERM 7344 / JCM 9153 / C-125) (Bacillus halodurans).